A 364-amino-acid chain; its full sequence is DNA replication and repair protein RecF (364 aa).

G30–T37 provides a ligand contact to ATP.

This sequence belongs to the RecF family.

The protein resides in the cytoplasm. The RecF protein is involved in DNA metabolism; it is required for DNA replication and normal SOS inducibility. RecF binds preferentially to single-stranded, linear DNA. It also seems to bind ATP. The protein is DNA replication and repair protein RecF of Geobacter sp. (strain M21).